A 186-amino-acid polypeptide reads, in one-letter code: Putative manganese efflux pump MntP (186 aa).

The next 6 helical transmembrane spans lie at 5–25 (VLIG…MDAF), 41–61 (VFQI…GGMI), 72–92 (ALAG…MIVA), 107–127 (FGLF…GLSL), 135–155 (ILTI…GLLL), and 166–186 (YSEA…LLPI).

The protein belongs to the MntP (TC 9.B.29) family.

It localises to the cell membrane. Its function is as follows. Probably functions as a manganese efflux pump. The chain is Putative manganese efflux pump MntP from Bacillus licheniformis (strain ATCC 14580 / DSM 13 / JCM 2505 / CCUG 7422 / NBRC 12200 / NCIMB 9375 / NCTC 10341 / NRRL NRS-1264 / Gibson 46).